A 62-amino-acid polypeptide reads, in one-letter code: Amolopin-p-MT1 (62 aa).

A signal peptide spans 1–22 (MFTLKKSLLLLFFLGTISLSLC). Residues 23-42 (EQERGADEEENGGEVTEEEV) constitute a propeptide, removed in mature form.

The protein belongs to the frog skin active peptide (FSAP) family. Brevinin subfamily. In terms of tissue distribution, expressed by the skin glands.

The protein resides in the secreted. Functionally, antimicrobial peptide. Active against a variety of Gram-negative and Gram-positive bacterial strains. Not active against fungi. Shows weak hemolytic activity against human erythrocytes. This Amolops mantzorum (Sichuan torrent frog) protein is Amolopin-p-MT1.